Here is a 387-residue protein sequence, read N- to C-terminus: TSC22 domain family protein 4 (387 aa).

Disordered stretches follow at residues 1-85 and 135-232; these read MSGG…GEPY and ISTP…RRDG. Residues 31 to 51 are compositionally biased toward pro residues; that stretch reads PVPPALAGPPPRLPNGDPNPD. Thr57 carries the post-translational modification Phosphothreonine. Residues Ser62 and Ser165 each carry the phosphoserine modification. The residue at position 183 (Thr183) is a Phosphothreonine. A phosphoserine mark is found at Ser187, Ser189, and Ser219. At Thr223 the chain carries Phosphothreonine. Phosphoserine occurs at positions 254, 258, and 271. A leucine-zipper region spans residues 336-357; the sequence is LKEQIRDLAERNAALEQENGLL. The residue at position 362 (Ser362) is a Phosphoserine. The segment at 368-387 is disordered; that stretch reads QLPSSGLPRLGPSAPNGPSI.

This sequence belongs to the TSC-22/Dip/Bun family. Forms a homodimer or heterodimer. Forms a heterodimer with TSC22D1 isoforms 1 and 2. Interacts with NRBP1. As to expression, expressed in the liver (at protein level). Expressed in Purkinje cells and proliferating cerebellar granular neurons (at protein level). Expressed in the cortex, medulla and papilla of the kidney.

It is found in the nucleus. The protein resides in the cytoplasm. The protein localises to the cell projection. Its subcellular location is the dendrite. It localises to the synapse. Binds DNA and acts as a transcriptional repressor. Involved in the regulation of systematic glucose homeostasis and insulin sensitivity, via transcriptional repression of downstream insulin signaling targets such as OBP2A/LCN13. Acts as a negative regulator of lipogenic gene expression in hepatocytes and thereby mediates the control of very low-density lipoprotein release. May play a role in neurite elongation and survival. The chain is TSC22 domain family protein 4 from Mus musculus (Mouse).